Consider the following 301-residue polypeptide: F-actin-capping protein subunit beta (301 aa).

Serine 31 carries the post-translational modification Phosphoserine. At lysine 264 the chain carries N6-acetyllysine.

Belongs to the F-actin-capping protein beta subunit family. Component of the F-actin capping complex, composed of a heterodimer of an alpha and a beta subunit. Subunit of dynactin, a multiprotein complex part of a tripartite complex with dynein and a adapter, such as BICDL1, BICD2 or HOOK3. The dynactin complex is built around ACTR1A/ACTB filament and consists of an actin-related filament composed of a shoulder domain, a pointed end and a barbed end. Its length is defined by its flexible shoulder domain. The soulder is composed of 2 DCTN1 subunits, 4 DCTN2 and 2 DCTN3. The 4 DCNT2 (via N-terminus) bind the ACTR1A filament and act as molecular rulers to determine the length. The pointed end is important for binding dynein-dynactin cargo adapters. Consists of 4 subunits: ACTR10, DCNT4, DCTN5 and DCTN6. The barbed end is composed of a CAPZA1:CAPZB heterodimers, which binds ACTR1A/ACTB filament and dynactin and stabilizes dynactin. Interacts with ARHGAP17. Interaction with RCSD1/CAPZIP. Component of the WASH complex, composed of F-actin-capping protein subunit alpha (CAPZA1, CAPZA2 or CAPZA3), F-actin-capping protein subunit beta (CAPZB), WASH (WASHC1, WASH2P, WASH3P, WASH4P, WASH5P or WASH6P), WASHC2 (WASHC2A or WASHC2C), WASHC3, WASHC4 and WASHC5. Interacts with ACTG1. Directly interacts with CRACD; this interaction decreases binding to actin. As to expression, the isoform beta-3 is predominantly expressed in the testis. It is only detected in total sperm, sperm heads and the calyx fraction, but not in sperm tails or any supernatant fraction. Weaker expression also found in brain.

The protein resides in the cytoplasm. Its subcellular location is the cytoskeleton. It localises to the perinuclear theca. It is found in the calyx. Functionally, F-actin-capping proteins bind in a Ca(2+)-independent manner to the fast growing ends of actin filaments (barbed end) thereby blocking the exchange of subunits at these ends. Unlike other capping proteins (such as gelsolin and severin), these proteins do not sever actin filaments. Plays a role in the regulation of cell morphology and cytoskeletal organization. Forms, with CAPZB, the barbed end of the fast growing ends of actin filaments in the dynactin complex and stabilizes dynactin structure. The dynactin multiprotein complex activates the molecular motor dynein for ultra-processive transport along microtubules. The protein is F-actin-capping protein subunit beta (CAPZB) of Bos taurus (Bovine).